Consider the following 399-residue polypeptide: Tryptophan synthase beta chain (399 aa).

At K92 the chain carries N6-(pyridoxal phosphate)lysine.

Belongs to the TrpB family. Tetramer of two alpha and two beta chains. Requires pyridoxal 5'-phosphate as cofactor.

The enzyme catalyses (1S,2R)-1-C-(indol-3-yl)glycerol 3-phosphate + L-serine = D-glyceraldehyde 3-phosphate + L-tryptophan + H2O. Its pathway is amino-acid biosynthesis; L-tryptophan biosynthesis; L-tryptophan from chorismate: step 5/5. Functionally, the beta subunit is responsible for the synthesis of L-tryptophan from indole and L-serine. This is Tryptophan synthase beta chain from Acidithiobacillus ferrooxidans (strain ATCC 23270 / DSM 14882 / CIP 104768 / NCIMB 8455) (Ferrobacillus ferrooxidans (strain ATCC 23270)).